A 562-amino-acid polypeptide reads, in one-letter code: Berberine bridge enzyme-like C-1 (562 aa).

An N-terminal signal peptide occupies residues M1–A19. N-linked (GlcNAc...) asparagine glycans are attached at residues N29 and N41. A disulfide bridge connects residues C33 and C90. The 177-residue stretch at N68–V244 folds into the FAD-binding PCMH-type domain. The residue at position 105 (H105) is a Pros-8alpha-FAD histidine. N-linked (GlcNAc...) asparagine glycans are attached at residues N359, N498, and N558.

It belongs to the oxygen-dependent FAD-linked oxidoreductase family. The cofactor is FAD. Mostly expressed in roots.

It is found in the vacuole. Its pathway is alkaloid biosynthesis; nicotine biosynthesis. Functionally, involved in the biosynthesis of pyridine alkaloid natural products, leading mainly to the production of anabasine, anatabine, nicotine and nornicotine, effective deterrents against herbivores with antiparasitic and pesticide properties (neurotoxins); nornicotine serves as the precursor in the synthesis of the carcinogen compound N'-nitrosonornicotine (NNN). Catalyzes a late oxidation step subsequent to the pyridine ring condensation reaction in the biosynthesis of alkaloids. This chain is Berberine bridge enzyme-like C-1, found in Nicotiana tabacum (Common tobacco).